A 293-amino-acid polypeptide reads, in one-letter code: MEDYLVKSVAENGQFRAYAVNATALVEEAHQIHDTWSAASAALGRAMVGTLLLATSGLQGEAGMTVKIQGDGPVGFIVVDGTAQGTVKAYMQNPHVHLPLNAKGKIDVAGAVGKTGTLSVTKMAPGDKTPYTGEVNLVSGELGDDFTYYLAQSEQIPSAVGLSVFVQSDDHIEVAGGFLIQVLPGASDEAINHLETTLRELPLVSDLLREGKTPEQILETIFAGRDLKILEKMPVEYKCDCSKDRFEKALASLSKDDLQEMIDNDHGAEAVCRFCGHKYHFSEEELKYLVATK.

Cystine bridges form between Cys239–Cys241 and Cys272–Cys275.

The protein belongs to the HSP33 family. Under oxidizing conditions two disulfide bonds are formed involving the reactive cysteines. Under reducing conditions zinc is bound to the reactive cysteines and the protein is inactive.

Its subcellular location is the cytoplasm. In terms of biological role, redox regulated molecular chaperone. Protects both thermally unfolding and oxidatively damaged proteins from irreversible aggregation. Plays an important role in the bacterial defense system toward oxidative stress. The sequence is that of 33 kDa chaperonin from Limosilactobacillus fermentum (strain NBRC 3956 / LMG 18251) (Lactobacillus fermentum).